Consider the following 204-residue polypeptide: Putative peptidase PfaP (204 aa).

The N-terminal stretch at 1-27 (MRLRKTRKIVVSMKDMAASGGYYIASS) is a signal peptide. Catalysis depends on Ser19, which acts as the Nucleophile. Catalysis depends on Lys70, which acts as the Proton donor/acceptor.

Belongs to the peptidase S49 family.

Functionally, possible protease. May be involved in export of periplasmic flagella proteins. The polypeptide is Putative peptidase PfaP (pfaP) (Leptospira borgpetersenii).